Here is a 192-residue protein sequence, read N- to C-terminus: Phosphomevalonate kinase (192 aa).

ATP-binding positions include 17–23 (KRKSGKD) and R141. N170 serves as a coordination point for substrate. ATP is bound by residues H171, R176, and Q180.

Monomer. Heart, liver, skeletal muscle, kidney, and pancreas. Lower level in brain, placenta and lung.

The protein localises to the cytoplasm. The protein resides in the cytosol. It catalyses the reaction (R)-5-phosphomevalonate + ATP = (R)-5-diphosphomevalonate + ADP. The protein operates within isoprenoid biosynthesis; isopentenyl diphosphate biosynthesis via mevalonate pathway; isopentenyl diphosphate from (R)-mevalonate: step 2/3. Functionally, catalyzes the reversible ATP-dependent phosphorylation of mevalonate 5-phosphate to produce mevalonate diphosphate and ADP, a key step in the mevalonic acid mediated biosynthesis of isopentenyl diphosphate and other polyisoprenoid metabolites. This Homo sapiens (Human) protein is Phosphomevalonate kinase (PMVK).